The chain runs to 70 residues: Mu-agatoxin-Ao1b (70 aa).

A signal peptide spans 1-20 (MKAIIFFCFLSVMVFIVAEA). Positions 21 to 33 (SSLEALKIFEGER) are excised as a propeptide. Disulfide bonds link Cys-35–Cys-50, Cys-42–Cys-55, Cys-49–Cys-65, and Cys-57–Cys-63. The residue at position 69 (Asn-69) is an Asparagine amide.

This sequence belongs to the neurotoxin 07 (Beta/delta-agtx) family. 04 (aga-5) subfamily. Expressed by the venom gland.

It localises to the secreted. Functionally, insecticidal neurotoxin that modulates the insect Nav channel (DmNaV1/tipE (para/tipE)) in a unique manner, with both the activation and inactivation processes being affected. The voltage dependence of activation is shifted toward more hyperpolarized potentials (analogous to site 4 toxins) and a non-inactivating persistent sodium current is induced (site 3-like action). Interestingly, both effects take place in a voltage-dependent manner, producing a bell-shaped curve between -80 and 0 mV. The sequence is that of Mu-agatoxin-Ao1b from Agelena orientalis (Funnel-web spider).